A 273-amino-acid chain; its full sequence is 4-hydroxy-tetrahydrodipicolinate reductase (273 aa).

NAD(+)-binding positions include 12–17 (GAGGRM) and E38. NADP(+) is bound at residue R39. Residues 102–104 (GTT) and 126–129 (AANF) each bind NAD(+). The active-site Proton donor/acceptor is the H159. H160 contacts (S)-2,3,4,5-tetrahydrodipicolinate. K163 serves as the catalytic Proton donor. 169-170 (GT) serves as a coordination point for (S)-2,3,4,5-tetrahydrodipicolinate.

This sequence belongs to the DapB family. As to quaternary structure, homotetramer.

It localises to the cytoplasm. It carries out the reaction (S)-2,3,4,5-tetrahydrodipicolinate + NAD(+) + H2O = (2S,4S)-4-hydroxy-2,3,4,5-tetrahydrodipicolinate + NADH + H(+). It catalyses the reaction (S)-2,3,4,5-tetrahydrodipicolinate + NADP(+) + H2O = (2S,4S)-4-hydroxy-2,3,4,5-tetrahydrodipicolinate + NADPH + H(+). Its pathway is amino-acid biosynthesis; L-lysine biosynthesis via DAP pathway; (S)-tetrahydrodipicolinate from L-aspartate: step 4/4. Catalyzes the conversion of 4-hydroxy-tetrahydrodipicolinate (HTPA) to tetrahydrodipicolinate. The protein is 4-hydroxy-tetrahydrodipicolinate reductase of Klebsiella pneumoniae subsp. pneumoniae (strain ATCC 700721 / MGH 78578).